The following is a 137-amino-acid chain: Small ribosomal subunit protein bS6 (137 aa).

Belongs to the bacterial ribosomal protein bS6 family.

Its function is as follows. Binds together with bS18 to 16S ribosomal RNA. In Sulfurimonas denitrificans (strain ATCC 33889 / DSM 1251) (Thiomicrospira denitrificans (strain ATCC 33889 / DSM 1251)), this protein is Small ribosomal subunit protein bS6.